The following is a 555-amino-acid chain: Cytochrome P450 monooxygeanse terQ (555 aa).

The chain crosses the membrane as a helical span at residues 10-30; that stretch reads VPAHAWPTITVAGAVMVVVLL. Cysteine 479 is a binding site for heme. The tract at residues 535-555 is disordered; it reads DAGNTARVDPGAPDGVASEPS.

The protein belongs to the cytochrome P450 family. The cofactor is heme.

The protein resides in the membrane. It participates in secondary metabolite biosynthesis. Functionally, cytochrome P450 monooxygeanse; part of the gene cluster that mediates the biosynthesis of terpendoles, indole-diterpene (IDT) mycotoxins including terpendole I, terpendole K, terpendole C, as well as the kinesin Eg5 inhibitor terpendole E. TerQ is a C11-hydroxylating enzyme that converts paspalline into terpendole E. Is also able to hydroxylate 13-desoxyterpendole I at C-13 to produce terpendole I. Terpendoles biosynthesis begins with the synthesis of geranylgeranyl diphosphate (GGPP) by a yet unidentified GGPP synthase. Condensation of indole-3-glycerol phosphate with GGPP by the prenyltransferase terC then forms 3-geranylgeranylindole (3-GGI), followed by epoxidation and cyclization of this intermediate (by the FAD-dependent monooxygeanse terM and the terpene cyclase terB) to form paspaline. The cytochrome monooxygenase terQ then hydroxylates paspalline at C-11 to yield terpendole E. The cytochrome monooxygenase terP converts terpendole E to 13-desoxyterpendole I, and terQ converts 13-desoxyterpendole I into terpendole I. TerF and terK are required for conversion of terpendole I to terpendole C which is further converted to terpendole K. The sequence is that of Cytochrome P450 monooxygeanse terQ from Tolypocladium album (Soil fungus).